The primary structure comprises 465 residues: 23S rRNA (uracil(1939)-C(5))-methyltransferase RlmD (465 aa).

Positions 1 to 24 are disordered; sequence MSEAVPLSTRRASSAGDAPGRAPV. Positions 16 to 80 constitute a TRAM domain; that stretch reads GDAPGRAPVL…PTYEQAQVVD (65 aa). [4Fe-4S] cluster contacts are provided by Cys93, Cys99, Cys102, and Cys181. Residues Gln289, Phe318, Asn323, Glu339, Asn367, and Asp388 each coordinate S-adenosyl-L-methionine. Cys421 (nucleophile) is an active-site residue.

This sequence belongs to the class I-like SAM-binding methyltransferase superfamily. RNA M5U methyltransferase family. RlmD subfamily.

The catalysed reaction is uridine(1939) in 23S rRNA + S-adenosyl-L-methionine = 5-methyluridine(1939) in 23S rRNA + S-adenosyl-L-homocysteine + H(+). In terms of biological role, catalyzes the formation of 5-methyl-uridine at position 1939 (m5U1939) in 23S rRNA. This Burkholderia mallei (strain ATCC 23344) protein is 23S rRNA (uracil(1939)-C(5))-methyltransferase RlmD.